Consider the following 361-residue polypeptide: Probable dual-specificity RNA methyltransferase RlmN (361 aa).

Catalysis depends on E91, which acts as the Proton acceptor. The Radical SAM core domain maps to 97–329; it reads QHYGLSVCVT…KKKGVNCVVR (233 aa). C104 and C340 are oxidised to a cystine. [4Fe-4S] cluster contacts are provided by C111, C115, and C118. S-adenosyl-L-methionine-binding positions include 163–164, S195, 218–220, and N296; these read GE and SLH. The active-site S-methylcysteine intermediate is C340.

This sequence belongs to the radical SAM superfamily. RlmN family. [4Fe-4S] cluster serves as cofactor.

It localises to the cytoplasm. The enzyme catalyses adenosine(2503) in 23S rRNA + 2 reduced [2Fe-2S]-[ferredoxin] + 2 S-adenosyl-L-methionine = 2-methyladenosine(2503) in 23S rRNA + 5'-deoxyadenosine + L-methionine + 2 oxidized [2Fe-2S]-[ferredoxin] + S-adenosyl-L-homocysteine. The catalysed reaction is adenosine(37) in tRNA + 2 reduced [2Fe-2S]-[ferredoxin] + 2 S-adenosyl-L-methionine = 2-methyladenosine(37) in tRNA + 5'-deoxyadenosine + L-methionine + 2 oxidized [2Fe-2S]-[ferredoxin] + S-adenosyl-L-homocysteine. In terms of biological role, specifically methylates position 2 of adenine 2503 in 23S rRNA and position 2 of adenine 37 in tRNAs. The chain is Probable dual-specificity RNA methyltransferase RlmN from Streptococcus pneumoniae serotype 4 (strain ATCC BAA-334 / TIGR4).